The sequence spans 355 residues: Peptide chain release factor 1 (355 aa).

Gln233 carries the post-translational modification N5-methylglutamine.

It belongs to the prokaryotic/mitochondrial release factor family. Methylated by PrmC. Methylation increases the termination efficiency of RF1.

The protein resides in the cytoplasm. Functionally, peptide chain release factor 1 directs the termination of translation in response to the peptide chain termination codons UAG and UAA. The sequence is that of Peptide chain release factor 1 from Desulfitobacterium hafniense (strain DSM 10664 / DCB-2).